The sequence spans 131 residues: Sirohydrochlorin cobaltochelatase (131 aa).

H12 functions as the Proton acceptor in the catalytic mechanism. Co(2+) contacts are provided by H12 and H78. Ni(2+)-binding residues include H12 and H78. Residue 73–78 (LASGVH) participates in substrate binding.

Belongs to the CbiX family. CbiXS subfamily. Homotetramer; dimer of dimers.

The catalysed reaction is Co-sirohydrochlorin + 2 H(+) = sirohydrochlorin + Co(2+). It carries out the reaction Ni-sirohydrochlorin + 2 H(+) = sirohydrochlorin + Ni(2+). Its pathway is cofactor biosynthesis; adenosylcobalamin biosynthesis; cob(II)yrinate a,c-diamide from sirohydrochlorin (anaerobic route): step 1/10. Functionally, catalyzes the insertion of Co(2+) into sirohydrochlorin as part of the anaerobic pathway to cobalamin biosynthesis. Involved in the biosynthesis of the unique nickel-containing tetrapyrrole coenzyme F430, the prosthetic group of methyl-coenzyme M reductase (MCR), which plays a key role in methanogenesis and anaerobic methane oxidation. Catalyzes the insertion of Ni(2+) into sirohydrochlorin to yield Ni-sirohydrochlorin. In Methanococcoides burtonii (strain DSM 6242 / NBRC 107633 / OCM 468 / ACE-M), this protein is Sirohydrochlorin cobaltochelatase.